We begin with the raw amino-acid sequence, 209 residues long: Thymidine kinase (209 aa).

ATP contacts are provided by residues 16–23 and 90–93; these read GPMFAGKT and DESQ. Residue E91 is the Proton acceptor of the active site.

Belongs to the thymidine kinase family. Homotetramer.

It is found in the cytoplasm. It catalyses the reaction thymidine + ATP = dTMP + ADP + H(+). The sequence is that of Thymidine kinase from Aster yellows witches'-broom phytoplasma (strain AYWB).